Reading from the N-terminus, the 642-residue chain is Threonine--tRNA ligase (642 aa).

Residues 1 to 61 (MPVITLPDGS…ETDAELSIIT (61 aa)) form the TGS domain. The tract at residues 243 to 534 (DHRKIGKQLD…LIEEYAGRFP (292 aa)) is catalytic. Zn(2+)-binding residues include cysteine 334, histidine 385, and histidine 511.

The protein belongs to the class-II aminoacyl-tRNA synthetase family. In terms of assembly, homodimer. Zn(2+) serves as cofactor.

Its subcellular location is the cytoplasm. The enzyme catalyses tRNA(Thr) + L-threonine + ATP = L-threonyl-tRNA(Thr) + AMP + diphosphate + H(+). Its function is as follows. Catalyzes the attachment of threonine to tRNA(Thr) in a two-step reaction: L-threonine is first activated by ATP to form Thr-AMP and then transferred to the acceptor end of tRNA(Thr). Also edits incorrectly charged L-seryl-tRNA(Thr). The sequence is that of Threonine--tRNA ligase from Shewanella sp. (strain MR-7).